Consider the following 368-residue polypeptide: Large ribosomal subunit protein bL27m (368 aa).

Residues 1-20 (MFSGLHTSKYACQVVVQIRT) constitute a mitochondrion transit peptide. Residues 23 to 44 (KRAAGSRTSMKDSAGRRLGPKK) form a disordered region. The segment covering 31–44 (SMKDSAGRRLGPKK) has biased composition (basic and acidic residues).

This sequence belongs to the bacterial ribosomal protein bL27 family.

It localises to the mitochondrion. Functionally, component of the large subunit of mitochondrial ribosome. The chain is Large ribosomal subunit protein bL27m (MRPL2) from Candida glabrata (strain ATCC 2001 / BCRC 20586 / JCM 3761 / NBRC 0622 / NRRL Y-65 / CBS 138) (Yeast).